The primary structure comprises 735 residues: Phosphoribosylformylglycinamidine synthase subunit PurL (735 aa).

His50 is an active-site residue. Positions 53 and 92 each coordinate ATP. Residue Glu94 participates in Mg(2+) binding. Residues 95-98 (SHNH) and Arg117 contribute to the substrate site. Residue His96 is the Proton acceptor of the active site. A Mg(2+)-binding site is contributed by Asp118. Gln241 is a substrate binding site. A Mg(2+)-binding site is contributed by Asp269. 313–315 (ESQ) provides a ligand contact to substrate. 2 residues coordinate ATP: Asp495 and Gly532. Residue Asn533 coordinates Mg(2+). Ser535 is a binding site for substrate.

This sequence belongs to the FGAMS family. In terms of assembly, monomer. Part of the FGAM synthase complex composed of 1 PurL, 1 PurQ and 2 PurS subunits.

It localises to the cytoplasm. The enzyme catalyses N(2)-formyl-N(1)-(5-phospho-beta-D-ribosyl)glycinamide + L-glutamine + ATP + H2O = 2-formamido-N(1)-(5-O-phospho-beta-D-ribosyl)acetamidine + L-glutamate + ADP + phosphate + H(+). It participates in purine metabolism; IMP biosynthesis via de novo pathway; 5-amino-1-(5-phospho-D-ribosyl)imidazole from N(2)-formyl-N(1)-(5-phospho-D-ribosyl)glycinamide: step 1/2. Its function is as follows. Part of the phosphoribosylformylglycinamidine synthase complex involved in the purines biosynthetic pathway. Catalyzes the ATP-dependent conversion of formylglycinamide ribonucleotide (FGAR) and glutamine to yield formylglycinamidine ribonucleotide (FGAM) and glutamate. The FGAM synthase complex is composed of three subunits. PurQ produces an ammonia molecule by converting glutamine to glutamate. PurL transfers the ammonia molecule to FGAR to form FGAM in an ATP-dependent manner. PurS interacts with PurQ and PurL and is thought to assist in the transfer of the ammonia molecule from PurQ to PurL. The sequence is that of Phosphoribosylformylglycinamidine synthase subunit PurL from Bartonella henselae (strain ATCC 49882 / DSM 28221 / CCUG 30454 / Houston 1) (Rochalimaea henselae).